Consider the following 25-residue polypeptide: Cytochrome c oxidase subunit 1 (25 aa).

This sequence belongs to the heme-copper respiratory oxidase family. It depends on Cu(2+) as a cofactor. Heme serves as cofactor.

The protein resides in the cell inner membrane. It catalyses the reaction 4 Fe(II)-[cytochrome c] + O2 + 8 H(+)(in) = 4 Fe(III)-[cytochrome c] + 2 H2O + 4 H(+)(out). It functions in the pathway energy metabolism; oxidative phosphorylation. Functionally, subunit I and II form the functional core of the enzyme complex. Electrons originating in cytochrome c are transferred via heme a and Cu(A) to the binuclear center formed by heme a3 and Cu(B). This cytochrome c oxidase shows proton pump activity across the membrane in addition to the electron transfer. The protein is Cytochrome c oxidase subunit 1 (ctaD) of Paracoccus versutus (Thiobacillus versutus).